Reading from the N-terminus, the 155-residue chain is Small ribosomal subunit protein uS7 (155 aa).

This sequence belongs to the universal ribosomal protein uS7 family. As to quaternary structure, part of the 30S ribosomal subunit. Contacts proteins S9 and S11.

Its function is as follows. One of the primary rRNA binding proteins, it binds directly to 16S rRNA where it nucleates assembly of the head domain of the 30S subunit. Is located at the subunit interface close to the decoding center, probably blocks exit of the E-site tRNA. The chain is Small ribosomal subunit protein uS7 from Thermotoga neapolitana (strain ATCC 49049 / DSM 4359 / NBRC 107923 / NS-E).